Consider the following 275-residue polypeptide: MNSTSNLIEQVIEAWQNMQAKTPLVQCITNSVAANYTANVLLASGASPAMIDNPYEAESFTKISSALSINLGTPTSEQMQAMQISAKTAQLNNVPWVLDPVGYGPILAWRSQMTDELLQFKPSVIRGNASEISTLAGNQVQSKGVDSTLSSDQAYQQAFSLLTHASCIAISGESDYILSNEVDAVIQVNGGSPLQPKITATGCALGALIAAYSAVTTPTIAALSAHIHFAIAGKLAANQAQTMGSFSSIFMDYIHMLDANLIEQYADVKLLNKQA.

Position 50 (Met50) interacts with substrate. Residues Arg126 and Ser171 each coordinate ATP. Residue Ala200 coordinates substrate.

The protein belongs to the Thz kinase family. It depends on Mg(2+) as a cofactor.

It catalyses the reaction 5-(2-hydroxyethyl)-4-methylthiazole + ATP = 4-methyl-5-(2-phosphooxyethyl)-thiazole + ADP + H(+). The protein operates within cofactor biosynthesis; thiamine diphosphate biosynthesis; 4-methyl-5-(2-phosphoethyl)-thiazole from 5-(2-hydroxyethyl)-4-methylthiazole: step 1/1. In terms of biological role, catalyzes the phosphorylation of the hydroxyl group of 4-methyl-5-beta-hydroxyethylthiazole (THZ). The protein is Hydroxyethylthiazole kinase of Acinetobacter baumannii (strain AB307-0294).